We begin with the raw amino-acid sequence, 116 residues long: Large ribosomal subunit protein bL17 (116 aa).

Belongs to the bacterial ribosomal protein bL17 family. In terms of assembly, part of the 50S ribosomal subunit. Contacts protein L32.

The sequence is that of Large ribosomal subunit protein bL17 from Synechococcus sp. (strain JA-3-3Ab) (Cyanobacteria bacterium Yellowstone A-Prime).